The primary structure comprises 430 residues: Trigger factor (430 aa).

In terms of domain architecture, PPIase FKBP-type spans 163 to 248; the sequence is GNIAIIDFKG…IKDIKVKELP (86 aa).

This sequence belongs to the FKBP-type PPIase family. Tig subfamily.

Its subcellular location is the cytoplasm. The catalysed reaction is [protein]-peptidylproline (omega=180) = [protein]-peptidylproline (omega=0). Involved in protein export. Acts as a chaperone by maintaining the newly synthesized protein in an open conformation. Functions as a peptidyl-prolyl cis-trans isomerase. The protein is Trigger factor of Clostridium botulinum (strain Langeland / NCTC 10281 / Type F).